A 311-amino-acid chain; its full sequence is Interleukin-20 receptor subunit beta (311 aa).

An N-terminal signal peptide occupies residues methionine 1 to threonine 29. At aspartate 30–leucine 233 the chain is on the extracellular side. Fibronectin type-III domains lie at alanine 37–threonine 136 and glutamate 144–glycine 228. Asparagine 40 is a glycosylation site (N-linked (GlcNAc...) asparagine). Cysteine 89 and cysteine 97 are joined by a disulfide. Residue asparagine 134 is glycosylated (N-linked (GlcNAc...) asparagine). Cysteine 202 and cysteine 223 are disulfide-bonded. The chain crosses the membrane as a helical span at residues valine 234–valine 254. Residues tryptophan 255–serine 311 are Cytoplasmic-facing.

Belongs to the type II cytokine receptor family. In terms of assembly, heterodimer with IL20RA and heterodimer with IL22RA1. As to expression, widely expressed with highest levels in skin and testis. Highly expressed in psoriatic skin.

It localises to the membrane. Its function is as follows. The IL20RA/IL20RB dimer is a receptor for IL19, IL20 and IL24. The IL22RA1/IL20RB dimer is a receptor for IL20 and IL24. The polypeptide is Interleukin-20 receptor subunit beta (IL20RB) (Homo sapiens (Human)).